Consider the following 234-residue polypeptide: Sugar fermentation stimulation protein A (234 aa).

A DNA-binding region (H-T-H motif) is located at residues 201-220 (LLSEAQQRGVEILAYKAEIS).

Belongs to the SfsA family.

Binds to DNA non-specifically. Could be a regulatory factor involved in maltose metabolism. The chain is Sugar fermentation stimulation protein A from Shigella dysenteriae serotype 1 (strain Sd197).